A 307-amino-acid chain; its full sequence is 4-hydroxy-tetrahydrodipicolinate synthase (307 aa).

Residue Thr-57 participates in pyruvate binding. The active-site Proton donor/acceptor is Tyr-145. The Schiff-base intermediate with substrate role is filled by Lys-173. Residue Val-215 participates in pyruvate binding.

Belongs to the DapA family. As to quaternary structure, homotetramer; dimer of dimers.

The protein resides in the cytoplasm. It carries out the reaction L-aspartate 4-semialdehyde + pyruvate = (2S,4S)-4-hydroxy-2,3,4,5-tetrahydrodipicolinate + H2O + H(+). It functions in the pathway amino-acid biosynthesis; L-lysine biosynthesis via DAP pathway; (S)-tetrahydrodipicolinate from L-aspartate: step 3/4. Catalyzes the condensation of (S)-aspartate-beta-semialdehyde [(S)-ASA] and pyruvate to 4-hydroxy-tetrahydrodipicolinate (HTPA). The polypeptide is 4-hydroxy-tetrahydrodipicolinate synthase (Leptospira interrogans serogroup Icterohaemorrhagiae serovar copenhageni (strain Fiocruz L1-130)).